The primary structure comprises 147 residues: Hemoglobin anodic subunit beta (147 aa).

One can recognise a Globin domain in the interval Glu2 to His147. Heme b-binding residues include His63 and His92.

Belongs to the globin family. Heterotetramer of two alpha chains and two beta chains. Red blood cells.

Involved in oxygen transport from gills to the various peripheral tissues. The sequence is that of Hemoglobin anodic subunit beta from Gymnothorax unicolor (Brown moray).